The sequence spans 162 residues: Protein lon-8 (162 aa).

A signal peptide spans 1–23 (MRNSRFCAILAVISAISVSYVLA).

The protein resides in the secreted. Its function is as follows. Secreted protein that is involved in larval elongation, early adult growth and male tail development. The chain is Protein lon-8 from Caenorhabditis elegans.